The following is a 381-amino-acid chain: GDP-mannose transporter (381 aa).

A compositionally biased stretch (basic and acidic residues) spans 1 to 12 (MSDDKKSDDYRV). Residues 1-28 (MSDDKKSDDYRVDMPSSRTSRAPSPIMR) form a disordered region. Residues 1–36 (MSDDKKSDDYRVDMPSSRTSRAPSPIMRPALKSAPS) lie on the Cytoplasmic side of the membrane. A helical transmembrane segment spans residues 37 to 57 (LTENPMAAVLAYCASSILMTV). The Lumenal segment spans residues 58–67 (TNKYVLSGVD). The helical transmembrane segment at 68-88 (FNLNFFLLCVQSVVCVTAISI) threads the bilayer. Over 89–107 (CKAAGLITYRDFNTDEAKK) the chain is Cytoplasmic. The helical transmembrane segment at 108 to 126 (WFPISLLLIGMIYTGTWAL) threads the bilayer. At 127–130 (KYLS) the chain is on the lumenal side. Residues 131–153 (IPVYTIFKNLTIILIAYGEVLWF) form a helical membrane-spanning segment. At 154-161 (GGSVTPMT) the chain is on the cytoplasmic side. Residues 162–184 (LFSFGLMVLSSIIAAWADIQHAL) form a helical membrane-spanning segment. Topologically, residues 185–199 (NSFGQQSEAANEALS) are lumenal. Residues 200 to 220 (TMHAGYLWMAFNCVCSATYLL) traverse the membrane as a helical segment. Residues 221 to 242 (SMRKRIKLTNFKDYDTMYYNNL) lie on the Cytoplasmic side of the membrane. Residues 243–263 (LTIPILLVASILVEDWSSANI) traverse the membrane as a helical segment. Over 264–274 (QKNFPPEQRNT) the chain is Lumenal. A helical membrane pass occupies residues 275 to 295 (VIMVMVISGMSTVFISYTSAW). The Cytoplasmic segment spans residues 296-303 (AVRVTSST). A helical membrane pass occupies residues 304–324 (TYSMVGALNKLPIAISGLVFF). Over 325-327 (DAP) the chain is Lumenal. A helical transmembrane segment spans residues 328–348 (VTFGSVSAIFVGFVSGIVYAV). The Cytoplasmic segment spans residues 349–381 (AKVRQNSKPKTVLPTTNIPLSASSRSMQDSLKA).

The protein belongs to the TPT transporter family. SLC35D subfamily. As to quaternary structure, homooligomer.

It localises to the golgi apparatus membrane. The protein resides in the cytoplasmic vesicle membrane. Its subcellular location is the endoplasmic reticulum membrane. Functionally, involved in the import of GDP-mannose from the cytoplasm into the Golgi lumen. The chain is GDP-mannose transporter (VRG4) from Phaeosphaeria nodorum (strain SN15 / ATCC MYA-4574 / FGSC 10173) (Glume blotch fungus).